The chain runs to 1266 residues: SUMO-interacting motif-containing protein 1 (1266 aa).

The interval 1–35 is disordered; it reads MEDFIVISDDSGSESSAGTRSGRARRLRRALSRTP. The segment covering 22-31 has biased composition (basic residues); sequence GRARRLRRAL. Positions 45–49 match the SUMO interaction motif 1 (SIM); mediates the binding to polysumoylated substrates motif; sequence FIDLT. The SUMO interaction motif 2 (SIM); mediates the binding to polysumoylated substrates motif lies at 64–68; it reads VIDLT. 2 stretches are compositionally biased toward low complexity: residues 183 to 197 and 532 to 553; these read SPFS…SSSN and SSGG…VPQS. Disordered stretches follow at residues 183-206, 532-732, 756-812, and 1024-1052; these read SPFS…PCPQ, SSGG…SGDV, NRHS…PGSA, and LTPP…PQPN. Positions 560-571 are enriched in polar residues; sequence SPGSVSQSSGDV. Residues 764–777 show a composition bias toward low complexity; sequence SAPSSPSCSANPLS. The segment at 779 to 1266 is interaction with SLF2; sequence QSEFSSEKRP…NPDTEPASER (488 aa). A required for inhibition of CAPN3 protease activity region spans residues 857 to 1266; sequence SKGQKLEPIP…NPDTEPASER (410 aa). Positions 865-1200 are NSE5-like domain; it reads IPHRRLRMVT…IDRKDLIIKR (336 aa).

As to quaternary structure, forms a heterodimer with SLF2. Interacts (via SIM domains) with SUMO1 and SUMO2. Interacts with CAPN3 and CTBP1. Interacts with SMC6 and ZNF451.

The protein localises to the nucleus. It is found in the PML body. Its function is as follows. Inhibits the protease activity of CAPN3. May play a role in SMC5-SMC6 complex recruitment for viral restriction. Forms a complex with SLF2 and this complex is required to recruit SMC5-SMC6 complex to PML nuclear bodies and sites of viral replication. This Rattus norvegicus (Rat) protein is SUMO-interacting motif-containing protein 1 (Simc1).